Reading from the N-terminus, the 369-residue chain is MNIDFPFQQPSLYGYKLNELKSILSPAFRAKQIYHWLYHRYENDAMRMDNISKTMQNYIREHFALSQIYPIRVEHSIDGSKKYLFETYDGHCFESVLIQMRDKKLGHKGEVVESEKWTMCLSSQIGCKVGCAFCFTAKGGFVRNLHASEIVEQVVIMKKDNQMAPHKRVNIVYMGMGEPLDNIENVTRAIEILSESEGLSISARRQTISTSGIAPKIKQLGKLNLGVQLAISLHAVDDKLRSQLIPMNKAYNISDILTEVRAFPIDTRKKVMFEYLMIKGVNDDLKSAKKLLQLLNGIKAKVNLILFNPHEGSTFKRPEINDVRAFADFLIKRGLLCTIRESRGIDISAACGQLREKVKAENVSCETLT.

The active-site Proton acceptor is Glu94. The region spanning 113–346 (ESEKWTMCLS…CTIRESRGID (234 aa)) is the Radical SAM core domain. The cysteines at positions 120 and 351 are disulfide-linked. The [4Fe-4S] cluster site is built by Cys127, Cys131, and Cys134. S-adenosyl-L-methionine contacts are provided by residues 177 to 178 (GE), Ser209, 232 to 234 (SLH), and Asn308. The S-methylcysteine intermediate role is filled by Cys351.

Belongs to the radical SAM superfamily. RlmN family. [4Fe-4S] cluster serves as cofactor.

It is found in the cytoplasm. The enzyme catalyses adenosine(2503) in 23S rRNA + 2 reduced [2Fe-2S]-[ferredoxin] + 2 S-adenosyl-L-methionine = 2-methyladenosine(2503) in 23S rRNA + 5'-deoxyadenosine + L-methionine + 2 oxidized [2Fe-2S]-[ferredoxin] + S-adenosyl-L-homocysteine. It carries out the reaction adenosine(37) in tRNA + 2 reduced [2Fe-2S]-[ferredoxin] + 2 S-adenosyl-L-methionine = 2-methyladenosine(37) in tRNA + 5'-deoxyadenosine + L-methionine + 2 oxidized [2Fe-2S]-[ferredoxin] + S-adenosyl-L-homocysteine. Specifically methylates position 2 of adenine 2503 in 23S rRNA and position 2 of adenine 37 in tRNAs. m2A2503 modification seems to play a crucial role in the proofreading step occurring at the peptidyl transferase center and thus would serve to optimize ribosomal fidelity. This is Dual-specificity RNA methyltransferase RlmN from Helicobacter hepaticus (strain ATCC 51449 / 3B1).